We begin with the raw amino-acid sequence, 545 residues long: Ribosomal protein uS12 methylthiotransferase RimO (545 aa).

The 123-residue stretch at 7–129 folds into the MTTase N-terminal domain; it reads RRVALVTLGC…IGEHLDAVLG (123 aa). [4Fe-4S] cluster is bound by residues cysteine 16, cysteine 52, cysteine 92, cysteine 197, cysteine 201, and cysteine 204. The 232-residue stretch at 183 to 414 folds into the Radical SAM core domain; the sequence is LTAGPVAALK…DLVEQLTATR (232 aa). The region spanning 416-510 is the TRAM domain; it reads QERIGSRVQV…GVDLVAEFTA (95 aa). 2 disordered regions span residues 454 to 486 and 516 to 545; these read LPGP…QPGV and RPSA…ADGT. Residues 455-464 are compositionally biased toward low complexity; it reads PGPAGAAAGP.

Belongs to the methylthiotransferase family. RimO subfamily. Requires [4Fe-4S] cluster as cofactor.

The protein localises to the cytoplasm. It catalyses the reaction L-aspartate(89)-[ribosomal protein uS12]-hydrogen + (sulfur carrier)-SH + AH2 + 2 S-adenosyl-L-methionine = 3-methylsulfanyl-L-aspartate(89)-[ribosomal protein uS12]-hydrogen + (sulfur carrier)-H + 5'-deoxyadenosine + L-methionine + A + S-adenosyl-L-homocysteine + 2 H(+). Functionally, catalyzes the methylthiolation of an aspartic acid residue of ribosomal protein uS12. In Frankia alni (strain DSM 45986 / CECT 9034 / ACN14a), this protein is Ribosomal protein uS12 methylthiotransferase RimO.